The sequence spans 605 residues: UvrABC system protein C (605 aa).

The GIY-YIG domain maps to 15–92; it reads GLPGCYLMKN…IQKHQPYFNI (78 aa). The 36-residue stretch at 197–232 folds into the UVR domain; it reads GHAKKDLTQRMEKAAADMAYERAGDLRDQIRYIEAT.

Belongs to the UvrC family. Interacts with UvrB in an incision complex.

The protein resides in the cytoplasm. The UvrABC repair system catalyzes the recognition and processing of DNA lesions. UvrC both incises the 5' and 3' sides of the lesion. The N-terminal half is responsible for the 3' incision and the C-terminal half is responsible for the 5' incision. This is UvrABC system protein C from Levilactobacillus brevis (strain ATCC 367 / BCRC 12310 / CIP 105137 / JCM 1170 / LMG 11437 / NCIMB 947 / NCTC 947) (Lactobacillus brevis).